A 90-amino-acid chain; its full sequence is Probable dynein light chain 2, cytoplasmic (90 aa).

Belongs to the dynein light chain family.

The protein localises to the cytoplasm. The protein resides in the cytoskeleton. Functionally, acts as one of several non-catalytic accessory components of a dynein complex. The chain is Probable dynein light chain 2, cytoplasmic (dlc-2) from Caenorhabditis elegans.